A 198-amino-acid chain; its full sequence is Cyclotides mra4/mra5 (198 aa).

The signal sequence occupies residues 1–22 (MESNKMVVGVLLIAAFALPALA). The propeptide occupies 23-79 (LFERDVITHETIEAVLKKSTPNSNTMLQEDAINALTGKTLISQTILEETLLKNGVVG). 3 disulfides stabilise this stretch: C84–C100, C88–C102, and C93–C107. A propeptide spanning residues 111-163 (SLALPTLEKDVITPEALEAVLKSNGGAIVNTKTIISNAIFEETLLNNANHVLG) is cleaved from the precursor. 3 disulfide bridges follow: C167/C183, C171/C185, and C176/C190. A propeptide spanning residues 194–198 (SLALN) is cleaved from the precursor.

The protein belongs to the cyclotide family. Bracelet subfamily. In terms of processing, these are cyclic peptides. Post-translationally, the mature peptides contain 3 disulfide bonds each.

In terms of biological role, probably participates in a plant defense mechanism. The polypeptide is Cyclotides mra4/mra5 (Melicytus ramiflorus (Whitey wood)).